The following is a 1185-amino-acid chain: Chromosome partition protein Smc (1185 aa).

34 to 41 (PNGSGKSN) is an ATP binding site. Coiled coils occupy residues 174–376 (WRRS…EKDI) and 412–526 (ENIV…KLDV). The region spanning 534–644 (VGEIISLQKK…CENIDNAFEI (111 aa)) is the SMC hinge domain. The stretch at 679–1039 (NIIGRKREIE…IDAMTEKMKG (361 aa)) forms a coiled coil.

This sequence belongs to the SMC family. In terms of assembly, homodimer.

Its subcellular location is the cytoplasm. Functionally, required for chromosome condensation and partitioning. The sequence is that of Chromosome partition protein Smc from Clostridium kluyveri (strain NBRC 12016).